Here is a 143-residue protein sequence, read N- to C-terminus: Small ribosomal subunit protein eS12 (143 aa).

This sequence belongs to the eukaryotic ribosomal protein eS12 family. In terms of assembly, component of the small ribosomal subunit. Mature ribosomes consist of a small (40S) and a large (60S) subunit. The 40S subunit contains about 32 different proteins and 1 molecule of RNA (18S). The 60S subunit contains 45 different proteins and 3 molecules of RNA (25S, 5.8S and 5S).

It is found in the cytoplasm. Component of the ribosome, a large ribonucleoprotein complex responsible for the synthesis of proteins in the cell. The small ribosomal subunit (SSU) binds messenger RNAs (mRNAs) and translates the encoded message by selecting cognate aminoacyl-transfer RNA (tRNA) molecules. The large subunit (LSU) contains the ribosomal catalytic site termed the peptidyl transferase center (PTC), which catalyzes the formation of peptide bonds, thereby polymerizing the amino acids delivered by tRNAs into a polypeptide chain. The nascent polypeptides leave the ribosome through a tunnel in the LSU and interact with protein factors that function in enzymatic processing, targeting, and the membrane insertion of nascent chains at the exit of the ribosomal tunnel. The chain is Small ribosomal subunit protein eS12 (RPS12) from Candida albicans (strain SC5314 / ATCC MYA-2876) (Yeast).